A 326-amino-acid chain; its full sequence is L-lactate dehydrogenase (326 aa).

Residues V20, D41, K46, Y71, and 85 to 86 (GA) contribute to the NAD(+) site. Residues Q88 and R94 each coordinate substrate. NAD(+)-binding positions include S107, 124-126 (AAN), and S149. Residue 126 to 129 (NPVD) participates in substrate binding. A substrate-binding site is contributed by 154–157 (DTAR). Residues R159, 171–174 (RSVH), and H174 each bind beta-D-fructose 1,6-bisphosphate. H181 functions as the Proton acceptor in the catalytic mechanism. Y226 carries the phosphotyrosine modification. T235 serves as a coordination point for substrate.

This sequence belongs to the LDH/MDH superfamily. LDH family. As to quaternary structure, homotetramer.

It is found in the cytoplasm. The catalysed reaction is (S)-lactate + NAD(+) = pyruvate + NADH + H(+). Its pathway is fermentation; pyruvate fermentation to lactate; (S)-lactate from pyruvate: step 1/1. Allosterically activated by fructose 1,6-bisphosphate (FBP) alone under acidic conditions, while it requires additional activation factors such as divalent cations (Mn(2+)) under neutral conditions. Under acidic conditions, Mn(2+) is an inhibitor in the absence of fructose 1,6-bisphosphate (FBP). In case of L.casei, L-LDH binds four fructose 1,6-bisphosphate (FBP) molecules per tetramer, while usual allosteric L-LDH binds only two fructose 1,6-bisphosphate (FBP) molecules per tetramer. Catalyzes the conversion of lactate to pyruvate. This is L-lactate dehydrogenase from Lacticaseibacillus casei (Lactobacillus casei).